A 392-amino-acid chain; its full sequence is Heat-inducible transcription repressor HrcA (392 aa).

It belongs to the HrcA family.

Its function is as follows. Negative regulator of class I heat shock genes (grpE-dnaK-dnaJ and groELS operons). Prevents heat-shock induction of these operons. The chain is Heat-inducible transcription repressor HrcA from Chlamydia trachomatis serovar D (strain ATCC VR-885 / DSM 19411 / UW-3/Cx).